The sequence spans 112 residues: Nitrogenase-stabilizing/protective protein NifW (112 aa).

The protein belongs to the NifW family. As to quaternary structure, homotrimer; associates with NifD.

May protect the nitrogenase Fe-Mo protein from oxidative damage. The sequence is that of Nitrogenase-stabilizing/protective protein NifW from Paraburkholderia xenovorans (strain LB400).